Reading from the N-terminus, the 251-residue chain is S-acyl fatty acid synthase thioesterase, medium chain (251 aa).

Active-site residues include Ser-90 and His-226.

Belongs to the thioesterase family.

It carries out the reaction (9Z)-octadecenoyl-[ACP] + H2O = (9Z)-octadecenoate + holo-[ACP] + H(+). Its function is as follows. In fatty acid biosynthesis chain termination and release of the free fatty acid product is achieved by hydrolysis of the thio ester by a thioesterase I, a component of the fatty acid synthetase complex. The chain length of the released fatty acid is usually C16. However, in the mammary glands of non-ruminant mammals, and in the uropygial gland of certain waterfowl there exists a second thioesterase which releases medium-chain length fatty acids (C8 to C2). The polypeptide is S-acyl fatty acid synthase thioesterase, medium chain (Anas platyrhynchos (Mallard)).